A 275-amino-acid chain; its full sequence is Pyrroline-5-carboxylate reductase (275 aa).

It belongs to the pyrroline-5-carboxylate reductase family.

The protein localises to the cytoplasm. The enzyme catalyses L-proline + NADP(+) = (S)-1-pyrroline-5-carboxylate + NADPH + 2 H(+). It catalyses the reaction L-proline + NAD(+) = (S)-1-pyrroline-5-carboxylate + NADH + 2 H(+). It participates in amino-acid biosynthesis; L-proline biosynthesis; L-proline from L-glutamate 5-semialdehyde: step 1/1. Catalyzes the reduction of 1-pyrroline-5-carboxylate (PCA) to L-proline. In Pasteurella multocida (strain Pm70), this protein is Pyrroline-5-carboxylate reductase.